The following is a 201-amino-acid chain: UPF0301 protein Bpet0561 (201 aa).

Belongs to the UPF0301 (AlgH) family.

The sequence is that of UPF0301 protein Bpet0561 from Bordetella petrii (strain ATCC BAA-461 / DSM 12804 / CCUG 43448).